A 513-amino-acid polypeptide reads, in one-letter code: Alpha-1B-glycoprotein (513 aa).

The signal sequence occupies residues 1–20 (MSLLTTVLLLWGFTLGPGNA). Ig-like V-type domains follow at residues 22 to 126 (WLDS…VTGK), 127 to 219 (EPLP…MSAT), 220 to 312 (QLPP…PVEL), 313 to 415 (MWSD…LRIN), and 416 to 513 (GPAP…VEGS). N-linked (GlcNAc...) asparagine glycans are attached at residues Asn-44, Asn-89, and Asn-192. Disulfide bonds link Cys-49/Cys-96, Cys-153/Cys-195, Cys-245/Cys-292, Cys-343/Cys-392, and Cys-441/Cys-488. N-linked (GlcNAc...) asparagine glycosylation is found at Asn-369, Asn-381, Asn-389, and Asn-485.

In terms of assembly, interacts with CRISP3. Isoform 1 is expressed in normal liver. Isoform 2 is expressed in the regenerating liver after partial hepatectomy and at very low levels in the normal lung, brain and testis.

Its subcellular location is the secreted. The sequence is that of Alpha-1B-glycoprotein from Rattus norvegicus (Rat).